We begin with the raw amino-acid sequence, 595 residues long: Aspartate--tRNA(Asp/Asn) ligase (595 aa).

E175 contacts L-aspartate. The interval 199-202 (QQYK) is aspartate. 2 residues coordinate L-aspartate: R221 and H454. 221-223 (RDE) contacts ATP. Residue E488 participates in ATP binding. Residue R495 participates in L-aspartate binding. 540-543 (GIDR) lines the ATP pocket.

It belongs to the class-II aminoacyl-tRNA synthetase family. Type 1 subfamily. In terms of assembly, homodimer.

It is found in the cytoplasm. The catalysed reaction is tRNA(Asx) + L-aspartate + ATP = L-aspartyl-tRNA(Asx) + AMP + diphosphate. Aspartyl-tRNA synthetase with relaxed tRNA specificity since it is able to aspartylate not only its cognate tRNA(Asp) but also tRNA(Asn). Reaction proceeds in two steps: L-aspartate is first activated by ATP to form Asp-AMP and then transferred to the acceptor end of tRNA(Asp/Asn). The protein is Aspartate--tRNA(Asp/Asn) ligase of Brucella abortus (strain S19).